The chain runs to 375 residues: Alcohol dehydrogenase B (375 aa).

Zn(2+) is bound by residues Cys40, His62, Cys92, Cys95, Cys98, Cys106, and Cys169.

The protein belongs to the zinc-containing alcohol dehydrogenase family. It depends on Zn(2+) as a cofactor.

The protein resides in the cytoplasm. The catalysed reaction is a primary alcohol + NAD(+) = an aldehyde + NADH + H(+). It carries out the reaction a secondary alcohol + NAD(+) = a ketone + NADH + H(+). The sequence is that of Alcohol dehydrogenase B (adhB) from Mycobacterium bovis (strain ATCC BAA-935 / AF2122/97).